The chain runs to 870 residues: DNA polymerase kappa (870 aa).

One can recognise a UmuC domain in the interval 103–358 (IVHIDMDAFY…LPIRKVSGIG (256 aa)). Mg(2+)-binding residues include Asp-107, Asp-198, and Glu-199. 2 consecutive UBZ4-type zinc fingers follow at residues 621-651 (ILTC…DGPS) and 776-806 (ALVC…NKSF). Zn(2+) is bound by residues Cys-624, Cys-627, His-642, Cys-646, Cys-779, Cys-782, His-797, and Cys-801. A disordered region spans residues 816-858 (NPVNQPKESSRSTGSSSGVQKAVTRTKRPGLMTKYSTSKKIKP).

It belongs to the DNA polymerase type-Y family. Interacts with REV1. Interacts with PCNA. Requires Mg(2+) as cofactor. The cofactor is Mn(2+). In terms of tissue distribution, detected at low levels in testis, spleen, prostate and ovary. Detected at very low levels in kidney, colon, brain, heart, liver, lung, placenta, pancreas and peripheral blood leukocytes.

Its subcellular location is the nucleus. It carries out the reaction DNA(n) + a 2'-deoxyribonucleoside 5'-triphosphate = DNA(n+1) + diphosphate. Functionally, DNA polymerase specifically involved in DNA repair. Plays an important role in translesion synthesis, where the normal high-fidelity DNA polymerases cannot proceed and DNA synthesis stalls. Depending on the context, it inserts the correct base, but causes frequent base transitions, transversions and frameshifts. Lacks 3'-5' proofreading exonuclease activity. Forms a Schiff base with 5'-deoxyribose phosphate at abasic sites, but does not have lyase activity. The polypeptide is DNA polymerase kappa (POLK) (Homo sapiens (Human)).